A 213-amino-acid chain; its full sequence is FMN-dependent NADH:quinone oxidoreductase (213 aa).

17–19 (SSS) is a binding site for FMN.

The protein belongs to the azoreductase type 1 family. In terms of assembly, homodimer. FMN is required as a cofactor.

It catalyses the reaction 2 a quinone + NADH + H(+) = 2 a 1,4-benzosemiquinone + NAD(+). The catalysed reaction is N,N-dimethyl-1,4-phenylenediamine + anthranilate + 2 NAD(+) = 2-(4-dimethylaminophenyl)diazenylbenzoate + 2 NADH + 2 H(+). Functionally, quinone reductase that provides resistance to thiol-specific stress caused by electrophilic quinones. Also exhibits azoreductase activity. Catalyzes the reductive cleavage of the azo bond in aromatic azo compounds to the corresponding amines. In Ruminiclostridium cellulolyticum (strain ATCC 35319 / DSM 5812 / JCM 6584 / H10) (Clostridium cellulolyticum), this protein is FMN-dependent NADH:quinone oxidoreductase.